The following is a 259-amino-acid chain: UPF0246 protein NMA1114 (259 aa).

It belongs to the UPF0246 family.

This Neisseria meningitidis serogroup A / serotype 4A (strain DSM 15465 / Z2491) protein is UPF0246 protein NMA1114.